The sequence spans 664 residues: Intraflagellar transport protein 70B (664 aa).

7 TPR repeats span residues 11–44 (DGEFTAVVYRLIRDSRYSEAVQLLSAELQRSSRS), 45–78 (RAGLSLLAYCYYRLQEFELAAECYEQLSQMHPEL), 153–186 (YDGQINLGCLLYKEGHYEAACSKFLAALQASGYQ), 188–220 (DLSYNLALAYYSSRQYAPALKHIADIIERGIRQ), 385–418 (LTEQLRKLTIQVQDSRHSRDDESAKKAVNEYDET), 423–456 (IPVLMAQAKIYWNFENYPMVEKIFRKSVEFCNDH), and 458–491 (VWKLNVAHVLFMQENKYKEAIGFYEPIVKKNYDN). The stretch at 507–534 (YIMTSQNEEAEELMRKIEKEEEQLSYGD) forms a coiled coil. Residues 543 to 576 (CIVNLVIGTLYCAKGNYDFGISRVIKSLEPYHKK) form a TPR 8 repeat.

This sequence belongs to the TTC30/dfy-1/fleer family. As to quaternary structure, interacts with the IFT B complex components IFT27, IFT46, IFT74, IFT52, IFT57, IFT80, IFT81 and IFT88. Interacts with KIF17.

It is found in the cell projection. The protein resides in the cilium. Functionally, required for polyglutamylation of axonemal tubulin. Plays a role in anterograde intraflagellar transport (IFT), the process by which cilia precursors are transported from the base of the cilium to the site of their incorporation at the tip. This is Intraflagellar transport protein 70B (Ift70b) from Mus musculus (Mouse).